A 1023-amino-acid chain; its full sequence is 2-oxoglutarate dehydrogenase complex component E1 (1023 aa).

The transit peptide at 1-40 (MFHLRTCAAKLRPLTASQTVKTFSQNRPAAARTFGQIRCY) directs the protein to the mitochondrion. An N6-succinyllysine modification is found at lysine 74. The residue at position 100 (serine 100) is a Phosphoserine. Ca(2+) is bound by residues histidine 143, aspartate 156, and aspartate 158. Residue arginine 312 participates in thiamine diphosphate binding. Lysine 401 is modified (N6-acetyllysine). 3 residues coordinate thiamine diphosphate: aspartate 411, asparagine 444, and isoleucine 446. Mg(2+) is bound by residues aspartate 411, asparagine 444, and isoleucine 446. A Glycyl lysine isopeptide (Lys-Gly) (interchain with G-Cter in ubiquitin) cross-link involves residue lysine 534. Position 564 is an N6-succinyllysine (lysine 564). Residue glutamine 676 participates in thiamine diphosphate binding. Lysine 970 carries the post-translational modification N6-acetyllysine.

This sequence belongs to the alpha-ketoglutarate dehydrogenase family. As to quaternary structure, homodimer. The 2-oxoglutarate dehydrogenase complex is composed of OGDH (2-oxoglutarate dehydrogenase; E1), DLST (dihydrolipoamide succinyltransferase; E2), DLD (dihydrolipoamide dehydrogenase; E3) and the assembly factor KGD4. It contains multiple copies of the three enzymatic components (E1, E2 and E3). In the nucleus, the 2-oxoglutarate dehydrogenase complex associates with KAT2A. Interacts with ABHD11; this interaction maintains the functional lipoylation of the 2-oxoglutarate dehydrogenase complex. Requires thiamine diphosphate as cofactor. Mg(2+) serves as cofactor.

It localises to the mitochondrion. Its subcellular location is the nucleus. It carries out the reaction N(6)-[(R)-lipoyl]-L-lysyl-[protein] + 2-oxoglutarate + H(+) = N(6)-[(R)-S(8)-succinyldihydrolipoyl]-L-lysyl-[protein] + CO2. Its activity is regulated as follows. Calcium ions and ADP stimulate, whereas ATP and NADH reduce catalytic activity. 2-oxoglutarate dehydrogenase (E1o) component of the 2-oxoglutarate dehydrogenase complex (OGDHC). Participates in the first step, rate limiting for the overall conversion of 2-oxoglutarate to succinyl-CoA and CO(2) catalyzed by the whole OGDHC. Catalyzes the irreversible decarboxylation of 2-oxoglutarate (alpha-ketoglutarate) via the thiamine diphosphate (ThDP) cofactor and subsequent transfer of the decarboxylated acyl intermediate on an oxidized dihydrolipoyl group that is covalently amidated to the E2 enzyme (dihydrolipoyllysine-residue succinyltransferase or DLST). Plays a key role in the Krebs (citric acid) cycle, which is a common pathway for oxidation of fuel molecules, including carbohydrates, fatty acids, and amino acids. Can catalyze the decarboxylation of 2-oxoadipate in vitro, but at a much lower rate than 2-oxoglutarate. Mainly active in the mitochondrion. A fraction of the 2-oxoglutarate dehydrogenase complex also localizes in the nucleus and is required for lysine succinylation of histones: associates with KAT2A on chromatin and provides succinyl-CoA to histone succinyltransferase KAT2A. This chain is 2-oxoglutarate dehydrogenase complex component E1, found in Bos taurus (Bovine).